A 662-amino-acid polypeptide reads, in one-letter code: Retaining alpha-galactosidase (662 aa).

The signal sequence occupies residues 1–19 (MKKLTFLLLCVLCTLSLQA). Glu174 contacts Ca(2+). Asp415 (nucleophile) is an active-site residue. Residues Glu464 and Glu470 each coordinate Ca(2+). Glu470 functions as the Proton donor/acceptor in the catalytic mechanism.

Belongs to the glycosyl hydrolase 97 family. Monomer. Ca(2+) is required as a cofactor.

It catalyses the reaction Hydrolysis of terminal, non-reducing alpha-D-galactose residues in alpha-D-galactosides, including galactose oligosaccharides, galactomannans and galactolipids.. Inhibited by EDTA in vitro. In terms of biological role, galactosidase that is able to hydrolyze the alpha-1,6 disaccharide melibiose and the synthetic p-nitrophenyl alpha-galactoside substrate (pNP-Gal), with retention of the anomeric configuration. Does not hydrolyze DNP-Glc or pNP-Glc. In Bacteroides thetaiotaomicron (strain ATCC 29148 / DSM 2079 / JCM 5827 / CCUG 10774 / NCTC 10582 / VPI-5482 / E50), this protein is Retaining alpha-galactosidase.